The chain runs to 130 residues: Small ribosomal subunit protein uS9 (130 aa).

It belongs to the universal ribosomal protein uS9 family.

The sequence is that of Small ribosomal subunit protein uS9 from Cupriavidus metallidurans (strain ATCC 43123 / DSM 2839 / NBRC 102507 / CH34) (Ralstonia metallidurans).